Consider the following 545-residue polypeptide: Glucose-6-phosphate isomerase (545 aa).

Glu-353 functions as the Proton donor in the catalytic mechanism. Residues His-384 and Lys-510 contribute to the active site.

It belongs to the GPI family.

The protein localises to the cytoplasm. It carries out the reaction alpha-D-glucose 6-phosphate = beta-D-fructose 6-phosphate. It participates in carbohydrate biosynthesis; gluconeogenesis. It functions in the pathway carbohydrate degradation; glycolysis; D-glyceraldehyde 3-phosphate and glycerone phosphate from D-glucose: step 2/4. In terms of biological role, catalyzes the reversible isomerization of glucose-6-phosphate to fructose-6-phosphate. This chain is Glucose-6-phosphate isomerase, found in Aromatoleum aromaticum (strain DSM 19018 / LMG 30748 / EbN1) (Azoarcus sp. (strain EbN1)).